The sequence spans 83 residues: Cytochrome c oxidase subunit 12, mitochondrial (83 aa).

The CHCH domain occupies 24 to 67; it reads TKHCWQSYVDYHKCVNMKGEDFAPCKVFWKTYNALCPLDWIEKW. The Cx9C motif signature appears at 27–37; that stretch reads CWQSYVDYHKC. 2 disulfide bridges follow: Cys-27-Cys-59 and Cys-37-Cys-48. The Cx10C motif motif lies at 48-59; it reads CKVFWKTYNALC. Ser-82 is subject to Phosphoserine.

It belongs to the cytochrome c oxidase subunit 6B family. Component of the cytochrome c oxidase (complex IV, CIV), a multisubunit enzyme composed of 12 subunits. The complex is composed of a catalytic core of 3 subunits COX1, COX2 and COX3, encoded in the mitochondrial DNA, and 9 supernumerary subunits COX4, COX5A (or COX5B), COX6, COX7, COX8, COX9, COX12, COX13 and COX26, which are encoded in the nuclear genome. The complex exists as a monomer or a dimer and forms supercomplexes (SCs) in the inner mitochondrial membrane with a dimer of ubiquinol-cytochrome c oxidoreductase (cytochrome b-c1 complex, complex III, CIII), resulting in 2 different assemblies (supercomplexes III(2)IV and III(2)IV(2)).

It localises to the mitochondrion inner membrane. Its pathway is energy metabolism; oxidative phosphorylation. Component of the cytochrome c oxidase, the last enzyme in the mitochondrial electron transport chain which drives oxidative phosphorylation. The respiratory chain contains 3 multisubunit complexes succinate dehydrogenase (complex II, CII), ubiquinol-cytochrome c oxidoreductase (cytochrome b-c1 complex, complex III, CIII) and cytochrome c oxidase (complex IV, CIV), that cooperate to transfer electrons derived from NADH and succinate to molecular oxygen, creating an electrochemical gradient over the inner membrane that drives transmembrane transport and the ATP synthase. Cytochrome c oxidase is the component of the respiratory chain that catalyzes the reduction of oxygen to water. Electrons originating from reduced cytochrome c in the intermembrane space (IMS) are transferred via the dinuclear copper A center (CU(A)) of COX2 and heme A of COX1 to the active site in COX1, a binuclear center (BNC) formed by heme A3 and copper B (CU(B)). The BNC reduces molecular oxygen to 2 water molecules unsing 4 electrons from cytochrome c in the IMS and 4 protons from the mitochondrial matrix. This is Cytochrome c oxidase subunit 12, mitochondrial (COX12) from Saccharomyces cerevisiae (strain ATCC 204508 / S288c) (Baker's yeast).